We begin with the raw amino-acid sequence, 323 residues long: Glyoxylate/hydroxypyruvate reductase B (323 aa).

Residues 37 to 62 (AEHGGAGARRRHDRLQQHGGSSAAGE) are disordered. Active-site residues include R236 and E265. The active-site Proton donor is the H284.

This sequence belongs to the D-isomer specific 2-hydroxyacid dehydrogenase family. GhrB subfamily. Homodimer.

Its subcellular location is the cytoplasm. It carries out the reaction glycolate + NADP(+) = glyoxylate + NADPH + H(+). It catalyses the reaction (R)-glycerate + NAD(+) = 3-hydroxypyruvate + NADH + H(+). The enzyme catalyses (R)-glycerate + NADP(+) = 3-hydroxypyruvate + NADPH + H(+). Catalyzes the NADPH-dependent reduction of glyoxylate and hydroxypyruvate into glycolate and glycerate, respectively. The sequence is that of Glyoxylate/hydroxypyruvate reductase B (tkrA) from Enterobacter agglomerans (Erwinia herbicola).